Consider the following 338-residue polypeptide: MSRRETPTSTISSTPTGTRTPRRRLSRKGHPVRRSPLIAKNSIFTVFDLSFEILINAVEENSLDIIKNYLRGDSFHQTAKWGLNVPPKTDFQGDTLLIKAAKKGKFLIAKALLEAGAYKEIVNKLGETALICAVRHFRVETLDLLIQYHADVKIKYKGQNLLELTLEKYSEKTKNFTLRIVQSLVAAGVELWHSDGSQIMASDKEIDEIIRNARNLQIIKKEKREAEERARTKKSKQITLQRIQRDLEYISKRLPFEENILTTPDFPQLFFEISKLVEIISDSQKENKEEFAEASISLIDALKNFGMILEKRDVPGEVKKEDTTLSRNNSLSCLSSPR.

The interval 1–31 (MSRRETPTSTISSTPTGTRTPRRRLSRKGHP) is disordered. Residues 7 to 19 (PTSTISSTPTGTR) are compositionally biased toward low complexity. Residues 20–31 (TPRRRLSRKGHP) are compositionally biased toward basic residues. ANK repeat units follow at residues 92 to 124 (QGDTLLIKAAKKGKFLIAKALLEAGAYKEIVNK) and 125 to 157 (LGETALICAVRHFRVETLDLLIQYHADVKIKYK). Residues 197 to 242 (SQIMASDKEIDEIIRNARNLQIIKKEKREAEERARTKKSKQITLQR) adopt a coiled-coil conformation. A disordered region spans residues 319–338 (KKEDTTLSRNNSLSCLSSPR). Over residues 325–338 (LSRNNSLSCLSSPR) the composition is skewed to low complexity.

This Coxiella burnetii (strain RSA 493 / Nine Mile phase I) protein is Putative ankyrin repeat protein CBU_0781.